The primary structure comprises 470 residues: Uronate isomerase (470 aa).

The protein belongs to the metallo-dependent hydrolases superfamily. Uronate isomerase family.

The enzyme catalyses D-glucuronate = D-fructuronate. It catalyses the reaction aldehydo-D-galacturonate = keto-D-tagaturonate. It participates in carbohydrate metabolism; pentose and glucuronate interconversion. This chain is Uronate isomerase, found in Escherichia coli O17:K52:H18 (strain UMN026 / ExPEC).